A 472-amino-acid polypeptide reads, in one-letter code: Endoplasmic reticulum oxidoreductin-2 (472 aa).

The N-terminal stretch at 1 to 37 (MAETDVGSVKGKEKGSGKRWILLIGAIAAVLLAVVVA) is a signal peptide. N-linked (GlcNAc...) asparagine glycosylation occurs at N44. 6 cysteine pairs are disulfide-bonded: C55/C74, C57/C72, C111/C371, C120/C125, C221/C230, and C374/C377. R200, T202, and W213 together coordinate FAD. Residues S241 and H244 each coordinate FAD. N267 carries N-linked (GlcNAc...) asparagine glycosylation. FAD is bound by residues R274 and R281. N-linked (GlcNAc...) asparagine glycosylation occurs at N364.

This sequence belongs to the EROs family. May function both as a monomer and a homodimer. It depends on FAD as a cofactor. In terms of processing, N-glycosylated.

Its subcellular location is the endoplasmic reticulum membrane. Its function is as follows. Essential oxidoreductase that oxidizes proteins in the endoplasmic reticulum to produce disulfide bonds. Acts by oxidizing directly PDI isomerase through a direct disulfide exchange. Does not act as a direct oxidant of folding substrate, but relies on PDI to transfer oxidizing equivalent. Does not oxidize all PDI related proteins, suggesting that it can discriminate between PDI and related proteins. Its reoxidation probably involves electron transfer to molecular oxygen via FAD. Acts independently of glutathione. May be responsible for a significant proportion of reactive oxygen species (ROS) in the cell, thereby being a source of oxidative stress. In Arabidopsis thaliana (Mouse-ear cress), this protein is Endoplasmic reticulum oxidoreductin-2 (AERO2).